The following is an 80-amino-acid chain: Small ribosomal subunit protein bS18A (80 aa).

This sequence belongs to the bacterial ribosomal protein bS18 family. Part of the 30S ribosomal subunit. Forms a tight heterodimer with protein bS6.

Binds as a heterodimer with protein bS6 to the central domain of the 16S rRNA, where it helps stabilize the platform of the 30S subunit. The protein is Small ribosomal subunit protein bS18A of Rhodococcus jostii (strain RHA1).